The following is a 193-amino-acid chain: Molybdenum cofactor guanylyltransferase (193 aa).

Residues 8–10 (LAG), lysine 21, aspartate 67, and aspartate 98 contribute to the GTP site. Position 98 (aspartate 98) interacts with Mg(2+).

The protein belongs to the MobA family. As to quaternary structure, monomer. Mg(2+) serves as cofactor.

It is found in the cytoplasm. It catalyses the reaction Mo-molybdopterin + GTP + H(+) = Mo-molybdopterin guanine dinucleotide + diphosphate. In terms of biological role, transfers a GMP moiety from GTP to Mo-molybdopterin (Mo-MPT) cofactor (Moco or molybdenum cofactor) to form Mo-molybdopterin guanine dinucleotide (Mo-MGD) cofactor. The polypeptide is Molybdenum cofactor guanylyltransferase (Cereibacter sphaeroides (strain ATCC 17023 / DSM 158 / JCM 6121 / CCUG 31486 / LMG 2827 / NBRC 12203 / NCIMB 8253 / ATH 2.4.1.) (Rhodobacter sphaeroides)).